Consider the following 647-residue polypeptide: Neutral endopeptidase (647 aa).

A Peptidase M13 domain is found at Met-1–Trp-647. His-496 contacts Zn(2+). Glu-497 is an active-site residue. Residues His-500 and Glu-556 each contribute to the Zn(2+) site. Catalysis depends on Asp-560, which acts as the Proton donor.

The protein belongs to the peptidase M13 family. Requires Zn(2+) as cofactor.

The protein is Neutral endopeptidase (pepO) of Lactobacillus helveticus (Lactobacillus suntoryeus).